Here is a 185-residue protein sequence, read N- to C-terminus: Ribosome-recycling factor (185 aa).

The protein belongs to the RRF family.

It is found in the cytoplasm. Functionally, responsible for the release of ribosomes from messenger RNA at the termination of protein biosynthesis. May increase the efficiency of translation by recycling ribosomes from one round of translation to another. This chain is Ribosome-recycling factor, found in Myxococcus xanthus (strain DK1622).